Reading from the N-terminus, the 789-residue chain is Kin of IRRE-like protein 1 (789 aa).

The N-terminal stretch at 1–47 (MTLENRSTCLMTCQSSLLPKKPRFLSQKMWAPHLVVAYLIFVTLALA) is a signal peptide. Residues N5, N78, and N172 are each glycosylated (N-linked (GlcNAc...) asparagine). Topologically, residues 48 to 531 (LPGTQTRFSQ…REVLPVGIIA (484 aa)) are extracellular. 5 consecutive Ig-like C2-type domains span residues 49 to 147 (PGTQ…AKLT), 152 to 248 (PEDT…TSIE), 255 to 335 (PTVT…TLVN), 340 to 419 (PRIV…EVPL), and 424 to 520 (PPII…IQLE). A disulfide bridge connects residues C74 and C132. Intrachain disulfides connect C175–C232 and C276–C319. The N-linked (GlcNAc...) asparagine glycan is linked to N329. A disulfide bridge links C361 with C403. The short motif at 437–439 (RGD) is the Cell attachment site element. Cysteines 445 and 504 form a disulfide. N-linked (GlcNAc...) asparagine glycosylation occurs at N503. A helical membrane pass occupies residues 532-552 (GATIGAGILLVFSFAALVFFL). The Cytoplasmic segment spans residues 553-789 (YRRRKGSRKD…RFQQRMQTHV (237 aa)). S606 carries the post-translational modification Phosphoserine. Phosphotyrosine; by FYN occurs at positions 637 and 638. Y654 and Y657 each carry phosphotyrosine. The interval 687–713 (RAPASDYGTEPTPSGPSAPGGTDTTSQ) is disordered. Residues 694-712 (GTEPTPSGPSAPGGTDTTS) are compositionally biased toward low complexity. A Phosphotyrosine modification is found at Y756.

Belongs to the immunoglobulin superfamily. In terms of assembly, interacts with TJP1/ZO-1 and with NPHS2/podocin (via the C-terminus). Interacts with NPHS1/nephrin (via the Ig-like domains); this interaction is dependent on KIRREL1 glycosylation. Homodimer (via the Ig-like domains). Interacts when tyrosine-phosphorylated with GRB2. Phosphorylation probably regulates the interaction with NPHS2. Phosphorylated at Tyr-637 and Tyr-638 by FYN, leading to GRB2 binding. In terms of processing, N-glycosylated.

Its subcellular location is the cell membrane. Required for proper function of the glomerular filtration barrier. It is involved in the maintenance of a stable podocyte architecture with interdigitating foot processes connected by specialized cell-cell junctions, known as the slit diaphragm. It is a signaling protein that needs the presence of TEC kinases to fully trans-activate the transcription factor AP-1. The chain is Kin of IRRE-like protein 1 (Kirrel1) from Rattus norvegicus (Rat).